A 105-amino-acid chain; its full sequence is Ig lambda chain C region (105 aa).

An Ig-like domain is found at 2–100 (PKAAPTVNLF…EGTIVEKTVT (99 aa)). A disulfide bridge links C27 with C86.

The sequence is that of Ig lambda chain C region from Sus scrofa (Pig).